The following is an 86-amino-acid chain: Small ribosomal subunit protein uS17 (86 aa).

Belongs to the universal ribosomal protein uS17 family. Part of the 30S ribosomal subunit.

Its function is as follows. One of the primary rRNA binding proteins, it binds specifically to the 5'-end of 16S ribosomal RNA. The protein is Small ribosomal subunit protein uS17 of Shouchella clausii (strain KSM-K16) (Alkalihalobacillus clausii).